Here is a 142-residue protein sequence, read N- to C-terminus: Transcription antitermination protein NusB (142 aa).

The protein belongs to the NusB family.

Functionally, involved in transcription antitermination. Required for transcription of ribosomal RNA (rRNA) genes. Binds specifically to the boxA antiterminator sequence of the ribosomal RNA (rrn) operons. The polypeptide is Transcription antitermination protein NusB (Buchnera aphidicola subsp. Cinara cedri (strain Cc)).